The following is a 108-amino-acid chain: Phosphoribosyl-AMP cyclohydrolase (108 aa).

Residue aspartate 72 participates in Mg(2+) binding. Cysteine 73 is a Zn(2+) binding site. 2 residues coordinate Mg(2+): aspartate 74 and aspartate 76. Cysteine 89 and cysteine 96 together coordinate Zn(2+).

Belongs to the PRA-CH family. In terms of assembly, homodimer. The cofactor is Mg(2+). It depends on Zn(2+) as a cofactor.

Its subcellular location is the cytoplasm. The catalysed reaction is 1-(5-phospho-beta-D-ribosyl)-5'-AMP + H2O = 1-(5-phospho-beta-D-ribosyl)-5-[(5-phospho-beta-D-ribosylamino)methylideneamino]imidazole-4-carboxamide. It participates in amino-acid biosynthesis; L-histidine biosynthesis; L-histidine from 5-phospho-alpha-D-ribose 1-diphosphate: step 3/9. Catalyzes the hydrolysis of the adenine ring of phosphoribosyl-AMP. The sequence is that of Phosphoribosyl-AMP cyclohydrolase from Archaeoglobus fulgidus (strain ATCC 49558 / DSM 4304 / JCM 9628 / NBRC 100126 / VC-16).